We begin with the raw amino-acid sequence, 273 residues long: HTH-type transcriptional activator RhaS (273 aa).

Residues Y174–Q272 enclose the HTH araC/xylS-type domain. 2 consecutive DNA-binding regions (H-T-H motif) follow at residues P191 to T212 and V239 to F262.

In terms of assembly, binds DNA as a dimer.

The protein localises to the cytoplasm. Its function is as follows. Activates expression of the rhaBAD and rhaT operons. This Yersinia pseudotuberculosis serotype O:1b (strain IP 31758) protein is HTH-type transcriptional activator RhaS.